A 166-amino-acid chain; its full sequence is MSSRTTLGLSAPDLSGLDGSGLKVAVVAAQWHGTVMTGLLDGALRGLVDSGVHDPAVIRVPGSFELPVACASLADHFDALVALGVIIRGGTPHFDYVCDAATRGITDVAVRTKTPIGFGILTCDDEAQALDRAGLEGSHEDKGYEAAQAAIATLTALSTALASGPS.

5-amino-6-(D-ribitylamino)uracil-binding positions include Trp-31, 63–65 (SFE), and 85–87 (VII). 90-91 (GT) contacts (2S)-2-hydroxy-3-oxobutyl phosphate. The active-site Proton donor is His-93. Phe-118 provides a ligand contact to 5-amino-6-(D-ribitylamino)uracil. Arg-132 lines the (2S)-2-hydroxy-3-oxobutyl phosphate pocket.

The protein belongs to the DMRL synthase family.

It carries out the reaction (2S)-2-hydroxy-3-oxobutyl phosphate + 5-amino-6-(D-ribitylamino)uracil = 6,7-dimethyl-8-(1-D-ribityl)lumazine + phosphate + 2 H2O + H(+). The protein operates within cofactor biosynthesis; riboflavin biosynthesis; riboflavin from 2-hydroxy-3-oxobutyl phosphate and 5-amino-6-(D-ribitylamino)uracil: step 1/2. Functionally, catalyzes the formation of 6,7-dimethyl-8-ribityllumazine by condensation of 5-amino-6-(D-ribitylamino)uracil with 3,4-dihydroxy-2-butanone 4-phosphate. This is the penultimate step in the biosynthesis of riboflavin. The sequence is that of 6,7-dimethyl-8-ribityllumazine synthase from Cutibacterium acnes (strain DSM 16379 / KPA171202) (Propionibacterium acnes).